A 437-amino-acid chain; its full sequence is GTPase Era, mitochondrial (437 aa).

The N-terminal 20 residues, 1–20, are a transit peptide targeting the mitochondrion; that stretch reads MAAPRRYCAGLVRALLGARQ. The Era-type G domain maps to 112-330; sequence RVLRVVLLGA…QYLLTQAQPG (219 aa). A G1 region spans residues 120-127; it reads GAPNAGKS. 120 to 127 is a binding site for GTP; the sequence is GAPNAGKS. The interval 146–150 is G2; that stretch reads HTTRC. Positions 167–170 are G3; it reads DTPG. 167–171 is a binding site for GTP; the sequence is DTPGI. Residue S173 is modified to Phosphoserine. Position 236–239 (236–239) interacts with GTP; it reads NKVD. The tract at residues 236-239 is G4; that stretch reads NKVD. A disordered region spans residues 270 to 292; the sequence is LRSRSSTHCPGPETEGPNAHSVR. The tract at residues 308 to 310 is G5; that stretch reads LSA. The 78-residue stretch at 360–437 folds into the KH type-2 domain; that stretch reads LPEEVPYGVQ…LIRLSVKLLK (78 aa).

Belongs to the TRAFAC class TrmE-Era-EngA-EngB-Septin-like GTPase superfamily. Era GTPase family.

Its subcellular location is the mitochondrion matrix. The protein resides in the mitochondrion inner membrane. Probable GTPase that plays a role in the mitochondrial ribosomal small subunit assembly. Specifically binds the 12S mitochondrial rRNA (12S mt-rRNA) to a 33 nucleotide section delineating the 3' terminal stem-loop region. May act as a chaperone that protects the 12S mt-rRNA on the 28S mitoribosomal subunit during ribosomal small subunit assembly. This is GTPase Era, mitochondrial (Eral1) from Mus musculus (Mouse).